The primary structure comprises 249 residues: 3-deoxy-D-manno-octulosonic acid kinase (249 aa).

Residue Asp175 is part of the active site.

The protein belongs to the protein kinase superfamily. KdkA/RfaP family.

The protein localises to the cell inner membrane. It carries out the reaction an alpha-Kdo-(2-&gt;6)-lipid IVA + ATP = a 4-O-phospho-alpha-Kdo-(2-&gt;6)-lipid IVA + ADP + H(+). It participates in bacterial outer membrane biogenesis; LPS core biosynthesis. In terms of biological role, catalyzes the ATP-dependent phosphorylation of the 3-deoxy-D-manno-octulosonic acid (Kdo) residue in Kdo-lipid IV(A) at the 4-OH position. The sequence is that of 3-deoxy-D-manno-octulosonic acid kinase from Stenotrophomonas maltophilia (strain K279a).